We begin with the raw amino-acid sequence, 163 residues long: Ribosome maturation factor RimP (163 aa).

Residues 66–85 (ALDRDDPVPGPPYELEVSSP) form a disordered region.

The protein belongs to the RimP family.

It localises to the cytoplasm. Required for maturation of 30S ribosomal subunits. The protein is Ribosome maturation factor RimP of Kocuria rhizophila (strain ATCC 9341 / DSM 348 / NBRC 103217 / DC2201).